The sequence spans 812 residues: Zn(2)-C6 fungal-type transcription factor pigI (812 aa).

The interval 42–74 is disordered; the sequence is GCLHPRSPPRDRTAMADNSNSSPPASRRREKPQ. Positions 77–105 form a DNA-binding region, zn(2)-C6 fungal-type; the sequence is CTLCRRRKLRCDRRQPCETCVRRGLSLSC.

The protein localises to the nucleus. Functionally, zn(2)-C6 fungal-type transcription factor; part of the gene cluster that mediates the biosynthesis of azaphilone pigments (MonAzPs), a complex mixture of compounds with a common azaphilone skeleton very widely used as food colorants. Acts probably as a negative regulator of the azaphilone pigments (MonAzPs) gene cluster. The protein is Zn(2)-C6 fungal-type transcription factor pigI of Monascus ruber (Mold).